The primary structure comprises 119 residues: Large ribosomal subunit protein bL20 (119 aa).

Belongs to the bacterial ribosomal protein bL20 family.

Its function is as follows. Binds directly to 23S ribosomal RNA and is necessary for the in vitro assembly process of the 50S ribosomal subunit. It is not involved in the protein synthesizing functions of that subunit. The chain is Large ribosomal subunit protein bL20 from Streptococcus thermophilus (strain ATCC BAA-491 / LMD-9).